We begin with the raw amino-acid sequence, 524 residues long: Alkaline phosphatase, tissue-nonspecific isozyme (524 aa).

The first 17 residues, 1–17, serve as a signal peptide directing secretion; the sequence is MISPFLVLAIGTCLTNS. Asp-60 contributes to the Mg(2+) binding site. The Zn(2+) site is built by Asp-60 and Ser-110. Ser-110 (phosphoserine intermediate) is an active-site residue. At Ser-110 the chain carries Phosphoserine. Cysteines 139 and 201 form a disulfide. A glycan (N-linked (GlcNAc...) asparagine) is linked at Asn-140. Thr-173 contributes to the Mg(2+) binding site. N-linked (GlcNAc...) asparagine glycosylation is present at Asn-230. Residue Glu-235 participates in Ca(2+) binding. Asn-271 is a glycosylation site (N-linked (GlcNAc...) asparagine). Ca(2+)-binding residues include Phe-290 and Glu-291. Asn-303 carries N-linked (GlcNAc...) asparagine glycosylation. Ca(2+) is bound at residue Asp-306. Glu-332 is a binding site for Mg(2+). Zn(2+)-binding residues include Asp-337, His-341, Asp-378, and His-379. Asn-430 carries N-linked (GlcNAc...) asparagine glycosylation. His-454 contacts Zn(2+). Cysteines 489 and 497 form a disulfide. The GPI-anchor amidated serine moiety is linked to residue Ser-501. The propeptide at 502–524 is removed in mature form; sequence SAGSLAAGPLLLALALYPLSVLF.

It belongs to the alkaline phosphatase family. In terms of assembly, homodimer. The cofactor is Mg(2+). Zn(2+) serves as cofactor. Ca(2+) is required as a cofactor. Post-translationally, N-glycosylated.

It is found in the cell membrane. Its subcellular location is the extracellular vesicle membrane. It localises to the mitochondrion membrane. The protein resides in the mitochondrion intermembrane space. The enzyme catalyses a phosphate monoester + H2O = an alcohol + phosphate. It catalyses the reaction diphosphate + H2O = 2 phosphate + H(+). It carries out the reaction pyridoxal 5'-phosphate + H2O = pyridoxal + phosphate. The catalysed reaction is phosphoethanolamine + H2O = ethanolamine + phosphate. The enzyme catalyses N-phosphocreatine + H2O = creatine + phosphate. It catalyses the reaction ATP + H2O = ADP + phosphate + H(+). It carries out the reaction ADP + H2O = AMP + phosphate + H(+). The catalysed reaction is AMP + H2O = adenosine + phosphate. Its activity is regulated as follows. Phosphatase activity is specifically inhibited by 5-((5-chloro-2-methoxyphenyl)sulfonamido)nicotinamide (SBI-425). In terms of biological role, alkaline phosphatase that metabolizes various phosphate compounds and plays a key role in skeletal mineralization and adaptive thermogenesis. Has broad substrate specificity and can hydrolyze a considerable variety of compounds: however, only a few substrates, such as diphosphate (inorganic pyrophosphate; PPi), pyridoxal 5'-phosphate (PLP) and N-phosphocreatine are natural substrates. Plays an essential role in skeletal and dental mineralization via its ability to hydrolyze extracellular diphosphate, a potent mineralization inhibitor, to phosphate: it thereby promotes hydroxyapatite crystal formation and increases inorganic phosphate concentration. Acts in a non-redundant manner with PHOSPHO1 in skeletal mineralization: while PHOSPHO1 mediates the initiation of hydroxyapatite crystallization in the matrix vesicles (MVs), ALPL/TNAP catalyzes the spread of hydroxyapatite crystallization in the extracellular matrix. Also promotes dephosphorylation of osteopontin (SSP1), an inhibitor of hydroxyapatite crystallization in its phosphorylated state; it is however unclear whether ALPL/TNAP mediates SSP1 dephosphorylation via a direct or indirect manner. Catalyzes dephosphorylation of PLP to pyridoxal (PL), the transportable form of vitamin B6, in order to provide a sufficient amount of PLP in the brain, an essential cofactor for enzymes catalyzing the synthesis of diverse neurotransmitters. Additionally, also able to mediate ATP degradation in a stepwise manner to adenosine, thereby regulating the availability of ligands for purinergic receptors. Also capable of dephosphorylating microbial products, such as lipopolysaccharides (LPS) as well as other phosphorylated small-molecules, such as poly-inosine:cytosine (poly I:C). Acts as a key regulator of adaptive thermogenesis as part of the futile creatine cycle: localizes to the mitochondria of thermogenic fat cells and acts by mediating hydrolysis of N-phosphocreatine to initiate a futile cycle of creatine dephosphorylation and phosphorylation. During the futile creatine cycle, creatine and N-phosphocreatine are in a futile cycle, which dissipates the high energy charge of N-phosphocreatine as heat without performing any mechanical or chemical work. This is Alkaline phosphatase, tissue-nonspecific isozyme from Homo sapiens (Human).